The sequence spans 372 residues: Putative glutamate--cysteine ligase 2 (372 aa).

It belongs to the glutamate--cysteine ligase type 2 family. YbdK subfamily.

The enzyme catalyses L-cysteine + L-glutamate + ATP = gamma-L-glutamyl-L-cysteine + ADP + phosphate + H(+). Its function is as follows. ATP-dependent carboxylate-amine ligase which exhibits weak glutamate--cysteine ligase activity. The polypeptide is Putative glutamate--cysteine ligase 2 (Gloeobacter violaceus (strain ATCC 29082 / PCC 7421)).